Here is a 340-residue protein sequence, read N- to C-terminus: Uroporphyrinogen decarboxylase (340 aa).

Residues 23–27, Asp-72, Tyr-147, Thr-202, and His-316 each bind substrate; that span reads RQAGR.

Belongs to the uroporphyrinogen decarboxylase family. As to quaternary structure, homodimer.

Its subcellular location is the cytoplasm. The catalysed reaction is uroporphyrinogen III + 4 H(+) = coproporphyrinogen III + 4 CO2. Its pathway is porphyrin-containing compound metabolism; protoporphyrin-IX biosynthesis; coproporphyrinogen-III from 5-aminolevulinate: step 4/4. In terms of biological role, catalyzes the decarboxylation of four acetate groups of uroporphyrinogen-III to yield coproporphyrinogen-III. The chain is Uroporphyrinogen decarboxylase from Trichlorobacter lovleyi (strain ATCC BAA-1151 / DSM 17278 / SZ) (Geobacter lovleyi).